The sequence spans 486 residues: METRHHLNTKMVPSYQAPLSKVTAADLTVERLPGCKYMNPSKKHILREEYRDKVKHIMYDPRPQEDLDAEYPVSCNKLVCELAAARKHLHFNPSETSIGIVTCGGICPGLNDVIRSITLTGIISYRVKRVVGFRYGYWGLSKEGSKTAIELSRSDVRQIHRFGGTILGSSRGPQNPKEMVDTLVRMKINILFTVGGDGTQRGALTIYEEAKRPGENIAVFGVPKTIDNDLAFSHRTFGFQTAVEQAVNAVRAAYAEAVSLNYGVGIVKLMGRESGFIAAQTTVASAQANICLIPENPLPKETVMRLIERRLQQSRNCVIVVAEGFGQDWETGTGGHDASGNKKLVDIGFILKKEVESWLRANKEKFPQGTVKYIDPSYMIRACPPSSNDALFCTNLATLAVHEAMAGATGCIISMRYNNYILVPIKAATSVRRVVSLRGALWRQVREITVGLSDDVQQWNEQDLRRHLESLNVERERIIARLASKV.

Residues Gly105, 171–172 (RG), and 196–199 (GDGT) each bind ATP. Asp197 contributes to the Mg(2+) binding site. Substrate contacts are provided by residues 225-227 (TID), 270-272 (MGR), Glu323, and 378-381 (YMIR). Asp227 serves as the catalytic Proton acceptor. A Peroxisomal targeting signal motif is present at residues 484–486 (SKV).

Belongs to the phosphofructokinase type A (PFKA) family. PPi-dependent PFK group II subfamily. Atypical ATP-dependent clade 'X' sub-subfamily. Homotetramer. The cofactor is Mg(2+).

It is found in the glycosome. The catalysed reaction is beta-D-fructose 6-phosphate + ATP = beta-D-fructose 1,6-bisphosphate + ADP + H(+). It participates in carbohydrate degradation; glycolysis; D-glyceraldehyde 3-phosphate and glycerone phosphate from D-glucose: step 3/4. Allosterically activated by AMP. Catalyzes the phosphorylation of D-fructose 6-phosphate to fructose 1,6-bisphosphate by ATP, the first committing step of glycolysis. The protein is ATP-dependent 6-phosphofructokinase of Leishmania donovani.